Reading from the N-terminus, the 506-residue chain is GTPase Der (506 aa).

2 consecutive EngA-type G domains span residues 3-166 (PVVA…GEQL) and 218-391 (IKIA…ACAT). GTP is bound by residues 9 to 16 (GRPNVGKS), 56 to 60 (DTGGI), 118 to 121 (NKTD), 224 to 231 (GRPNVGKS), 271 to 275 (DTAGV), and 336 to 339 (NKWD). One can recognise a KH-like domain in the interval 392 to 476 (QKNSTSMLTR…PIRIQFQEGN (85 aa)).

Belongs to the TRAFAC class TrmE-Era-EngA-EngB-Septin-like GTPase superfamily. EngA (Der) GTPase family. Associates with the 50S ribosomal subunit.

Its function is as follows. GTPase that plays an essential role in the late steps of ribosome biogenesis. The polypeptide is GTPase Der (Actinobacillus pleuropneumoniae serotype 7 (strain AP76)).